The primary structure comprises 200 residues: Putative biotin transporter BioYB (200 aa).

6 helical membrane passes run 13–33 (LIGM…VAPF), 36–56 (VAGI…LLLG), 61–81 (AIAM…FAQF), 90–110 (GKSG…GWFL), 121–141 (FLIA…TYMY), and 158–178 (WGFM…LSFI).

It belongs to the BioY family.

Its subcellular location is the cell membrane. Its function is as follows. Putative biotin transporter. This is Putative biotin transporter BioYB (bioYB) from Bacillus subtilis (strain 168).